Consider the following 91-residue polypeptide: Probable Fe(2+)-trafficking protein (91 aa).

This sequence belongs to the Fe(2+)-trafficking protein family.

Its function is as follows. Could be a mediator in iron transactions between iron acquisition and iron-requiring processes, such as synthesis and/or repair of Fe-S clusters in biosynthetic enzymes. In Burkholderia ambifaria (strain MC40-6), this protein is Probable Fe(2+)-trafficking protein.